Here is a 213-residue protein sequence, read N- to C-terminus: THAP domain-containing protein 1 (213 aa).

The THAP-type zinc finger occupies 1–81 (MVQSCSAYGC…LKENAVPTIF (81 aa)). Positions 134–137 (DHNY) match the HCFC1-binding motif (HBM) motif. The interval 139 to 185 (VEDTMHQRKRIHQLEQQVEKLRKKLKTAQQRCRRQERQLEKLKEVVH) is involved in homodimer formation. Residues 139-190 (VEDTMHQRKRIHQLEQQVEKLRKKLKTAQQRCRRQERQLEKLKEVVHFQKEK) are a coiled coil.

This sequence belongs to the THAP1 family. In terms of assembly, homodimer. Interacts with PAWR. Component of a THAP1/THAP3-HCFC1-OGT complex that contains, either THAP1 or THAP3, HCFC1 and OGT. Interacts with OGT. Interacts (via the HBM) with HCFC1 (via the Kelch-repeat domain); the interaction recruits HCFC1 to the RRM1 promoter. In terms of tissue distribution, highly expressed in heart, skeletal muscle, kidney and liver. Weaker expression in brain and placenta.

Its subcellular location is the nucleus. The protein localises to the nucleoplasm. The protein resides in the PML body. DNA-binding transcription regulator that regulates endothelial cell proliferation and G1/S cell-cycle progression. Specifically binds the 5'-[AT]NTNN[GT]GGCA[AGT]-3' core DNA sequence and acts by modulating expression of pRB-E2F cell-cycle target genes, including RRM1. Component of a THAP1/THAP3-HCFC1-OGT complex that is required for the regulation of the transcriptional activity of RRM1. May also have pro-apoptotic activity by potentiating both serum-withdrawal and TNF-induced apoptosis. In Homo sapiens (Human), this protein is THAP domain-containing protein 1 (THAP1).